A 235-amino-acid chain; its full sequence is Glial cell line-derived neurotrophic factor (235 aa).

A signal peptide spans 1-19; that stretch reads MKLWDILATCLLLLSSVST. Residues 20–87 constitute a propeptide that is removed on maturation; it reads RPLFHKLQPS…DFIEATLGRL (68 aa). 2 disordered regions span residues 34–60 and 91–137; these read VRSE…ASME and SDVE…RVKG. The segment covering 119–128 has biased composition (basic residues); it reads GERKRSRGRA. 3 cysteine pairs are disulfide-bonded: cysteine 142–cysteine 203, cysteine 169–cysteine 232, and cysteine 173–cysteine 234. N-linked (GlcNAc...) asparagine glycosylation is found at asparagine 150 and asparagine 186.

It belongs to the TGF-beta family. GDNF subfamily. As to quaternary structure, homodimer; disulfide-linked. Interacts with GFRA1 coreceptor and RET: forms a 2:2:2 ternary complex composed of GDNF ligand, GFRA1 and RET receptor. In terms of tissue distribution, first expressed at 14 hours post-fertilization (hpf) in the ventral half of anterior somites and in intermediate mesoderm. Ventral somitic expression persists and extends more posteriorly over the next 12 hours. Expressed throughout the ventral trunk mesoderm and endoderm at 24 hpf. By 30 hpf, somitic expression ceases and by 36 hpf, expression becomes restricted to the endodermal cells forming the gut, with expression along the whole length of the developing gut tube at 72 hpf.

It is found in the secreted. In terms of biological role, neurotrophic factor that enhances survival and morphological differentiation of dopaminergic neurons and increases their high-affinity dopamine uptake. Acts by binding to its coreceptor, GFRA1, leading to autophosphorylation and activation of the RET receptor. The protein is Glial cell line-derived neurotrophic factor of Danio rerio (Zebrafish).